Consider the following 344-residue polypeptide: SUMO-activating enzyme subunit 1 (344 aa).

The protein belongs to the ubiquitin-activating E1 family. Heterodimer of sae1 and uba2/sae2. The heterodimer corresponds to the two domains that are encoded on a single polypeptide chain in ubiquitin-activating enzyme E1. Interacts with ube2i.

It is found in the nucleus. It functions in the pathway protein modification; protein sumoylation. The heterodimer acts as an E1 ligase for sumo1, sumo2, and sumo3. It mediates ATP-dependent activation of sumo proteins followed by formation of a thioester bond between a sumo protein and a conserved active site cysteine residue on uba2/sae2. This Xenopus laevis (African clawed frog) protein is SUMO-activating enzyme subunit 1 (sae1).